A 586-amino-acid polypeptide reads, in one-letter code: Asparagine synthetase [glutamine-hydrolyzing] 2 (586 aa).

C2 acts as the For GATase activity in catalysis. One can recognise a Glutamine amidotransferase type-2 domain in the interval 2-185 (CGILAVLGCS…PGHLYSSKEK (184 aa)). L-glutamine is bound by residues 50–54 (RLAIV), 75–77 (NGE), and D98. Residues 193 to 516 (PPWFSEAIPS…PQNSARLSVP (324 aa)) enclose the Asparagine synthetase domain. ATP-binding positions include L231, V267, and 341 to 342 (SG).

It carries out the reaction L-aspartate + L-glutamine + ATP + H2O = L-asparagine + L-glutamate + AMP + diphosphate + H(+). It participates in amino-acid biosynthesis; L-asparagine biosynthesis; L-asparagine from L-aspartate (L-Gln route): step 1/1. The sequence is that of Asparagine synthetase [glutamine-hydrolyzing] 2 (AS2) from Lotus japonicus (Lotus corniculatus var. japonicus).